The primary structure comprises 245 residues: MTNWKLEISYIGKDFYGFQKQPGKRTIQGELEKVLSFLFDEEIRVIGAGRTDTGVHALGQVVNFKSRGHKGFSCDKLHKVLNRLLPEDIKIKKVEIVDDSFHARYSAKRRWYIYVVYNNDERDLFLKDYSWWISREINRELLIFSANLFKGVHDFKNFCVTEDEDQTVIEVYESFWYFKKDLLIYFISAPFFLRKMVRFIVGSMVEIALGRKSLIELEDYLKEERKERFSVPAPPWGLYLFRVDY.

Residue aspartate 52 is the Nucleophile of the active site. Position 112 (tyrosine 112) interacts with substrate.

This sequence belongs to the tRNA pseudouridine synthase TruA family. In terms of assembly, homodimer.

It carries out the reaction uridine(38/39/40) in tRNA = pseudouridine(38/39/40) in tRNA. In terms of biological role, formation of pseudouridine at positions 38, 39 and 40 in the anticodon stem and loop of transfer RNAs. This chain is tRNA pseudouridine synthase A, found in Dictyoglomus turgidum (strain DSM 6724 / Z-1310).